The following is a 304-amino-acid chain: bZIP transcription factor 50 (304 aa).

At 1–222 (MDVEFFADLD…MQESAVLTET (222 aa)) the chain is on the cytoplasmic side. Disordered regions lie at residues 26 to 60 (GSGVSGLFAPSPPHDAEAGSPESVSSRRPSPSREA) and 94 to 163 (GEEE…ERKK). Over residues 45-59 (SPESVSSRRPSPSRE) the composition is skewed to low complexity. The segment covering 127 to 139 (EKEDVEAEVDGDD) has biased composition (acidic residues). The 63-residue stretch at 141–203 (MSKKKRRQMR…NMALRQSLLK (63 aa)) folds into the bZIP domain. The basic motif stretch occupies residues 143 to 167 (KKKRRQMRNRDSAMKSRERKKMYVK). The segment covering 150–163 (RNRDSAMKSRERKK) has biased composition (basic and acidic residues). Residues 169-183 (LETKSKYLEAECRRL) are leucine-zipper. A helical transmembrane segment spans residues 223-243 (LPLVSLLWLVSIVCLLPVPGL). The Lumenal segment spans residues 244–304 (PNRNPVARSS…GPFRLAAAAC (61 aa)).

It belongs to the bZIP family.

Its subcellular location is the endoplasmic reticulum membrane. The protein localises to the nucleus. With respect to regulation, transcriptionally activated by IRE1 in response to endoplasmic reticulum (ER) stress. IRE1 cleaves a 20-bp fragment causing a frameshift of the mRNA transcript, leading to a nuclear isoform of the BZIP50 activator. Transcription factor involved in endoplasmic reticulum (ER) stress response. Acts downstream of the ER stress sensors IRE1, BZIP39 and BZIP60 to activate BiP chaperone genes. The sequence is that of bZIP transcription factor 50 from Oryza sativa subsp. japonica (Rice).